Here is a 903-residue protein sequence, read N- to C-terminus: Protein translocase subunit SecA (903 aa).

ATP-binding positions include glutamine 87, 105-109 (GEGKT), and aspartate 512. 4 residues coordinate Zn(2+): cysteine 887, cysteine 889, cysteine 898, and histidine 899.

Belongs to the SecA family. In terms of assembly, monomer and homodimer. Part of the essential Sec protein translocation apparatus which comprises SecA, SecYEG and auxiliary proteins SecDF-YajC and YidC. Requires Zn(2+) as cofactor.

The protein localises to the cell inner membrane. Its subcellular location is the cytoplasm. It catalyses the reaction ATP + H2O + cellular proteinSide 1 = ADP + phosphate + cellular proteinSide 2.. In terms of biological role, part of the Sec protein translocase complex. Interacts with the SecYEG preprotein conducting channel. Has a central role in coupling the hydrolysis of ATP to the transfer of proteins into and across the cell membrane, serving both as a receptor for the preprotein-SecB complex and as an ATP-driven molecular motor driving the stepwise translocation of polypeptide chains across the membrane. The chain is Protein translocase subunit SecA from Photorhabdus laumondii subsp. laumondii (strain DSM 15139 / CIP 105565 / TT01) (Photorhabdus luminescens subsp. laumondii).